We begin with the raw amino-acid sequence, 614 residues long: MEPAEKVKHFPDKPGVYLFRGARGEVLYVGKAVSLKNRVRSYFTGARSDKVQALVGKTRDVECLVTGSEIEALILESNLIKEHRPRYNVVLKDDKSYPYLKVTVQEEYPRIFLTRAQPRDGARYFGPYPSAAAVHETVRLLKKLFPLRSCRQTRFRQQRPCLNHHIGRCLGPCSGTVDPERYRAMVQEVLLFLEGRHADLVRGLARKMEAAAANLEFERAAELRDQLRAVEQVLARQSIVSPGREDRDVLALARDGNRGRVIVLEIRDGKLLGRHSLDLQGIAERSDAEVLAAFLKQYYREAGLIPPEVLLPVPLGEEQGLIAEWLGLRRQGRVRLHVPRRGRKRELVRLAEQNAAEARAQMEFERDAGEALAELAAVLGLDQAPARLEGYDISNLQGAQTVGVMVVFEDGRPAPGEYRQFRVRETAGTPNDFAAMREVVARRFARAREEGKLIATGRLSSRDARFHRLPDLVLVDGGKGQLSAALEGLRETGFEAVPVFALTKEEEKIFAPGRSDPVPVPPGSQALFLLQHLRDEAHRFAVDTHRRTRSRESLRSLLEEIDGIGPARRRALQKAFPSLDALKGATLAELAAVPSMNRKAAQAVYDYFQDTPTE.

Positions 12–89 (DKPGVYLFRG…IKEHRPRYNV (78 aa)) constitute a GIY-YIG domain. Residues 198-233 (ADLVRGLARKMEAAAANLEFERAAELRDQLRAVEQV) enclose the UVR domain.

This sequence belongs to the UvrC family. Interacts with UvrB in an incision complex.

The protein resides in the cytoplasm. The UvrABC repair system catalyzes the recognition and processing of DNA lesions. UvrC both incises the 5' and 3' sides of the lesion. The N-terminal half is responsible for the 3' incision and the C-terminal half is responsible for the 5' incision. The protein is UvrABC system protein C of Desulforudis audaxviator (strain MP104C).